A 628-amino-acid chain; its full sequence is 1-deoxy-D-xylulose-5-phosphate synthase (628 aa).

Residues histidine 72 and 113–115 (GHA) contribute to the thiamine diphosphate site. Aspartate 144 is a binding site for Mg(2+). Thiamine diphosphate is bound by residues 145–146 (GA), asparagine 174, tyrosine 287, and glutamate 370. Asparagine 174 provides a ligand contact to Mg(2+).

The protein belongs to the transketolase family. DXPS subfamily. In terms of assembly, homodimer. Requires Mg(2+) as cofactor. It depends on thiamine diphosphate as a cofactor.

The enzyme catalyses D-glyceraldehyde 3-phosphate + pyruvate + H(+) = 1-deoxy-D-xylulose 5-phosphate + CO2. Its pathway is metabolic intermediate biosynthesis; 1-deoxy-D-xylulose 5-phosphate biosynthesis; 1-deoxy-D-xylulose 5-phosphate from D-glyceraldehyde 3-phosphate and pyruvate: step 1/1. Catalyzes the acyloin condensation reaction between C atoms 2 and 3 of pyruvate and glyceraldehyde 3-phosphate to yield 1-deoxy-D-xylulose-5-phosphate (DXP). This is 1-deoxy-D-xylulose-5-phosphate synthase from Prochlorococcus marinus (strain NATL2A).